The primary structure comprises 287 residues: Acetylglutamate kinase (287 aa).

Substrate contacts are provided by residues 64–65 (GG), arginine 86, and asparagine 181.

Belongs to the acetylglutamate kinase family. ArgB subfamily.

Its subcellular location is the cytoplasm. The enzyme catalyses N-acetyl-L-glutamate + ATP = N-acetyl-L-glutamyl 5-phosphate + ADP. Its pathway is amino-acid biosynthesis; L-arginine biosynthesis; N(2)-acetyl-L-ornithine from L-glutamate: step 2/4. Its function is as follows. Catalyzes the ATP-dependent phosphorylation of N-acetyl-L-glutamate. The chain is Acetylglutamate kinase from Desulforamulus reducens (strain ATCC BAA-1160 / DSM 100696 / MI-1) (Desulfotomaculum reducens).